The primary structure comprises 81 residues: Antimicrobial peptide Con22 (81 aa).

Residues 1–22 (MNAKVMLVCLLVTMLVMEPAEA) form the signal peptide. Residues 66–81 (EAGQIPFDEFMNVLYS) constitute a propeptide that is removed on maturation.

This sequence belongs to the non-disulfide-bridged peptide (NDBP) superfamily. Long chain multifunctional peptide (group 2) family. In terms of tissue distribution, expressed by the venom gland.

The protein localises to the secreted. Its subcellular location is the target cell membrane. At high concentrations, acts as a pore former in cellular membranes and causes the leakage of the cells. At submicromolar concentrations, degranulates granulocytes and has a weak hemolytic activity against human erythrocytes. Also strongly inhibits the production of superoxide anions. Has a strong antibacterial activity against Gram-negative bacteria but is less active against Gram-positive bacteria. Also has antifungal activity. The chain is Antimicrobial peptide Con22 from Urodacus yaschenkoi (Inland robust scorpion).